The following is a 237-amino-acid chain: Ras-related protein Rab-33A (237 aa).

The GTP site is built by asparagine 46, valine 47, glycine 48, lysine 49, threonine 50, cysteine 51, threonine 65, and threonine 68. Threonine 50 serves as a coordination point for Mg(2+). The Switch 1 motif lies at 59-71 (GTFPDKTEATIGV). 2 residues coordinate Mg(2+): threonine 68 and aspartate 91. The Switch 2 motif lies at 92–111 (TAGQERFRKSMVEHYYRNVH). Residues glycine 94, asparagine 151, lysine 152, aspartate 154, alanine 182, and lysine 183 each contribute to the GTP site. S-geranylgeranyl cysteine attachment occurs at residues cysteine 235 and cysteine 237. Cysteine 237 carries the cysteine methyl ester modification.

The protein belongs to the small GTPase superfamily. Rab family. As to quaternary structure, interacts with ATG16L1; the interaction is important for autophagosome formation. Mg(2+) serves as cofactor. As to expression, expressed predominantly in brain. Weak expression in ovary.

Its subcellular location is the cell membrane. The enzyme catalyses GTP + H2O = GDP + phosphate + H(+). Its activity is regulated as follows. Regulated by guanine nucleotide exchange factors (GEFs) which promote the exchange of bound GDP for free GTP. Regulated by GTPase activating proteins (GAPs) which increase the GTP hydrolysis activity. Inhibited by GDP dissociation inhibitors (GDIs). In terms of biological role, the small GTPases Rab are key regulators of intracellular membrane trafficking, from the formation of transport vesicles to their fusion with membranes. Rabs cycle between an inactive GDP-bound form and an active GTP-bound form that is able to recruit to membranes different sets of downstream effectors directly responsible for vesicle formation, movement, tethering and fusion. Modulates autophagosome formation through interaction with ATG16L1. The polypeptide is Ras-related protein Rab-33A (Mus musculus (Mouse)).